We begin with the raw amino-acid sequence, 571 residues long: Kelch-like protein 28 (571 aa).

The region spanning 35 to 102 (CDIILRVGDV…AYTGTVFISQ (68 aa)) is the BTB domain. Kelch repeat units follow at residues 284 to 331 (VLCA…VLDQ), 332 to 386 (KVFV…VLAG), 387 to 433 (EVFA…VLDG), 435 to 479 (LYAI…VMLG), 480 to 526 (FIFV…VIDN), and 528 to 570 (LYVV…GLTA).

This Mus musculus (Mouse) protein is Kelch-like protein 28 (Klhl28).